We begin with the raw amino-acid sequence, 673 residues long: Pesticin receptor (673 aa).

The N-terminal stretch at 1–22 (MKMTRLYPLALGGLLLPAIANA) is a signal peptide. Positions 30-37 (STLEVTAS) match the TonB box motif. Residues 41 to 155 (SRSASANNVS…QGGIINIVTQ (115 aa)) enclose the TBDR plug domain. The TBDR beta-barrel domain maps to 160-672 (TPRGYIEGGV…TVGINTRIDF (513 aa)). The TonB C-terminal box motif lies at 657-673 (QVNMGRTVGINTRIDFF).

Belongs to the TonB-dependent receptor family.

The protein localises to the cell outer membrane. Its function is as follows. Receptor for the bacteriocin pesticin and for the siderophore yersiniabactin. The protein is Pesticin receptor (fyuA) of Yersinia enterocolitica.